The sequence spans 388 residues: Gastricsin (388 aa).

The signal sequence occupies residues 1 to 16 (MKWMVVAFICLQLLEA). Positions 17 to 59 (TVVKVPLKKFKSIRETMKEKGLLWEFLKTHKHDPARKYRVSDL) are cleaved as a propeptide — activation peptide. The Peptidase A1 domain occupies 73-385 (YFGEISIGTP…DLGNNRVGFA (313 aa)). Residue Asp91 is part of the active site. Disulfide bonds link Cys104–Cys109 and Cys267–Cys271. Asp276 is an active-site residue. A disulfide bond links Cys310 and Cys343.

Belongs to the peptidase A1 family.

The protein resides in the secreted. It catalyses the reaction More restricted specificity than pepsin A, but shows preferential cleavage at Tyr-|-Xaa bonds. High activity on hemoglobin.. Inhibited by pepstatin. Its function is as follows. Hydrolyzes a variety of proteins. The protein is Gastricsin (PGC) of Callithrix jacchus (White-tufted-ear marmoset).